A 196-amino-acid polypeptide reads, in one-letter code: MEFVYPKANLIAGVDEVGRGPLVGAVVTAAVILDPANPIQGLMDSKKLTEKKRNALYDEIKEKALCWAIGRAEPEEIDKLNILWATMKAMERAVAGLSITPDMVLVDGNRCPNLPMASQAVIKGDSLVQEISAASILAKVTRDREMEQLDKLYPDYGFAKHKGYPTAFHMEKLASLGATPYHRKSFAPVKRALNLV.

In terms of domain architecture, RNase H type-2 spans 9–196 (NLIAGVDEVG…APVKRALNLV (188 aa)). Residues aspartate 15, glutamate 16, and aspartate 107 each coordinate a divalent metal cation.

Belongs to the RNase HII family. Mn(2+) serves as cofactor. The cofactor is Mg(2+).

It is found in the cytoplasm. It carries out the reaction Endonucleolytic cleavage to 5'-phosphomonoester.. In terms of biological role, endonuclease that specifically degrades the RNA of RNA-DNA hybrids. In Proteus mirabilis (strain HI4320), this protein is Ribonuclease HII.